The primary structure comprises 146 residues: uncharacterized protein (146 aa).

A disordered region spans residues 67 to 93 (DDNGMESGFCSGATSTGQSASTSPAPV). Residues 77 to 92 (SGATSTGQSASTSPAP) are compositionally biased toward low complexity.

This is an uncharacterized protein from Caenorhabditis elegans.